Here is a 188-residue protein sequence, read N- to C-terminus: dCTP deaminase (188 aa).

Residues 111–116 (KSTYAR), 135–137 (TLE), glutamine 156, tyrosine 170, and glutamine 180 each bind dCTP. The active-site Proton donor/acceptor is glutamate 137.

Belongs to the dCTP deaminase family. As to quaternary structure, homotrimer.

The enzyme catalyses dCTP + H2O + H(+) = dUTP + NH4(+). It functions in the pathway pyrimidine metabolism; dUMP biosynthesis; dUMP from dCTP (dUTP route): step 1/2. Catalyzes the deamination of dCTP to dUTP. In Nitrosomonas europaea (strain ATCC 19718 / CIP 103999 / KCTC 2705 / NBRC 14298), this protein is dCTP deaminase.